Here is a 169-residue protein sequence, read N- to C-terminus: Photosystem I assembly protein Ycf3 (169 aa).

3 TPR repeats span residues 35–68, 72–105, and 120–153; these read AFTYYRDGMSAQSEGEYAEASQNYYEAMRLEIDP, SYILHNIGLIHTSNGEHARALEYYFQALERNPSL, and GEQAIQQGDFETSEAWFGKAADHWKQAVLLAPGN.

This sequence belongs to the Ycf3 family.

The protein resides in the plastid. It localises to the chloroplast thylakoid membrane. Functionally, essential for the assembly of the photosystem I (PSI) complex. May act as a chaperone-like factor to guide the assembly of the PSI subunits. In Huperzia lucidula (Shining clubmoss), this protein is Photosystem I assembly protein Ycf3.